The chain runs to 133 residues: S-protein homolog 9 (133 aa).

A signal peptide spans 1 to 20 (MNRLSCFLLVIGLCIGLSNA).

It belongs to the plant self-incompatibility (S1) protein family.

Its subcellular location is the secreted. The polypeptide is S-protein homolog 9 (Arabidopsis thaliana (Mouse-ear cress)).